The sequence spans 229 residues: Large ribosomal subunit protein uL1 (229 aa).

Belongs to the universal ribosomal protein uL1 family. In terms of assembly, part of the 50S ribosomal subunit.

Functionally, binds directly to 23S rRNA. The L1 stalk is quite mobile in the ribosome, and is involved in E site tRNA release. Protein L1 is also a translational repressor protein, it controls the translation of the L11 operon by binding to its mRNA. In Ureaplasma parvum serovar 3 (strain ATCC 27815 / 27 / NCTC 11736), this protein is Large ribosomal subunit protein uL1.